Consider the following 400-residue polypeptide: S-adenosylmethionine synthase (400 aa).

Residue 137–142 coordinates ATP; the sequence is GEGSGD.

Belongs to the AdoMet synthase 2 family. Mg(2+) is required as a cofactor.

The enzyme catalyses L-methionine + ATP + H2O = S-adenosyl-L-methionine + phosphate + diphosphate. Its pathway is amino-acid biosynthesis; S-adenosyl-L-methionine biosynthesis; S-adenosyl-L-methionine from L-methionine: step 1/1. Catalyzes the formation of S-adenosylmethionine from methionine and ATP. The polypeptide is S-adenosylmethionine synthase (Haloarcula marismortui (strain ATCC 43049 / DSM 3752 / JCM 8966 / VKM B-1809) (Halobacterium marismortui)).